The following is a 76-amino-acid chain: ATP synthase subunit 9, mitochondrial (76 aa).

The residue at position 1 (Met1) is an N-formylmethionine. A run of 2 helical transmembrane segments spans residues 14 to 34 (LASI…AALI) and 52 to 72 (ILGF…AFLL).

As to quaternary structure, F-type ATP synthases have 2 components, the catalytic core F(1) and the membrane-embedded component F(0), linked together by a central stalk and a peripheral stalk. The central stalk, also called rotor shaft, is often seen as part of F(1). The peripheral stalk is seen as part of F(0). F(0) contains the membrane channel next to the rotor. F-type ATP synthases form dimers but each monomer functions independently in ATP generation. The dimer consists of 17 different polypeptides: ATP1 (subunit alpha, 3 molecules per monomer, part of F(1)), ATP2 (subunit beta, 3 copies per monomer, part of F(1)), ATP3 (subunit gamma, part of the central stalk), ATP4 (subunit b, part of the peripheral stalk), ATP5/OSCP (subunit 5/OSCP, part of the peripheral stalk), ATP6 (subunit a, part of the peripheral stalk), ATP7 (subunit d, part of the peripheral stalk), ATP8 (subunit 8, part of the peripheral stalk), OLI1 (subunit c, part of the rotor, 10 molecules per monomer), ATP14 (subunit h, part of the peripheral stalk), ATP15 (subunit epsilon, part of the central stalk), ATP16 (subunit delta, part of the central stalk), ATP17 (subunit f, part of the peripheral stalk), ATP18 (subunit i/j, part of the peripheral stalk), ATP19 (subunit k, dimer-specific, at interface between monomers), ATP20 (subunit g, at interface between monomers), TIM11 (subunit e, at interface between monomers).

The protein localises to the mitochondrion inner membrane. Mitochondrial membrane ATP synthase (F(1)F(0) ATP synthase or Complex V) produces ATP from ADP in the presence of a proton gradient across the membrane which is generated by electron transport complexes of the respiratory chain. F-type ATP synthases consist of two structural domains, F(1) - containing the extramembraneous catalytic core, and F(0) - containing the membrane proton channel, linked together by a central stalk and a peripheral stalk. During catalysis, ATP synthesis in the catalytic domain of F(1) is coupled via a rotary mechanism of the central stalk subunits to proton translocation. Part of the complex F(0) domain. A homomeric c-ring of 10 OLI1/ATP9 subunits is part of the complex rotary element. The polypeptide is ATP synthase subunit 9, mitochondrial (Yarrowia lipolytica (strain CLIB 122 / E 150) (Yeast)).